The chain runs to 447 residues: Probable glycosyltransferase 7 (447 aa).

The tract at residues 1-31 (MRATTGARHLHPPWRRGLRHHRQSTMPPRAS) is disordered. Residues 1–37 (MRATTGARHLHPPWRRGLRHHRQSTMPPRASRGRLAD) are Cytoplasmic-facing. Residues 8-23 (RHLHPPWRRGLRHHRQ) show a composition bias toward basic residues. A helical; Signal-anchor for type II membrane protein transmembrane segment spans residues 38-60 (AALFTAGAVLGSVLLLTLASPFS). Over 61–447 (SSSSPSSGVG…LPFDHPTQTA (387 aa)) the chain is Lumenal. 2 N-linked (GlcNAc...) asparagine glycosylation sites follow: N285 and N329.

This sequence belongs to the glycosyltransferase 34 family.

The protein resides in the golgi apparatus membrane. Probable glycosyltransferase that may be involved in the biosynthesis of xyloglucan. The protein is Probable glycosyltransferase 7 of Oryza sativa subsp. indica (Rice).